Reading from the N-terminus, the 503-residue chain is MSLFSFPISTELLPWLLLLLIPPLLIFFLLRSPKNLPPGPPRLPILGNIHQLGSLPHRSLRDLSLKYGPVITVYLGSVRTVVVHSPETAEEVLKLHDSECCTRPKLSITKSFFYDGLGLGFTKWGDYYRDVRKLCVLELFSVKRANSFRNIREEELSRLVNSFSDSASSGSSVDLTANLAKFVASFTCRMAFGLSFQGSGMDNETFLELFTEANRVIGKFAAADIFPGFGWILDRISGLDSSRRKSFQDLDTFYQKAIVDHREKKKTEDREDLIDVLLKLQSQETKLGSSRITDTHIRAIIMDLFVAGVDTSVITLDWTMAELSRHPRVMKKVQAEIREHVGDKGIVTYDDLEALVYMKMVIKETWRLHAPSPILIPREAMTNFKIKGYDIYPGTRIHVNAWAIGRNPDVWKDPDEFIPERFVDSNVETKGTSFELLPFGSGRRGCPAMYVGLSTVEYTLANLLYHFDWKATEEVSVEEAPGLTSHRKHPLHLVPVNVINRKL.

Residues 10–30 (TELLPWLLLLLIPPLLIFFLL) traverse the membrane as a helical segment. Cys446 is a heme binding site.

The protein belongs to the cytochrome P450 family. It depends on heme as a cofactor.

Its subcellular location is the membrane. This Arabidopsis thaliana (Mouse-ear cress) protein is Cytochrome P450 71B6 (CYP71B6).